We begin with the raw amino-acid sequence, 273 residues long: Protein N-terminal and lysine N-methyltransferase EFM7 (273 aa).

The interval 1 to 32 is disordered; that stretch reads MSDIEDLASGGLFDEPKDFYKPEEQPGSDSYA. Residues 14 to 24 are compositionally biased toward basic and acidic residues; the sequence is DEPKDFYKPEE. S-adenosyl-L-methionine-binding positions include Trp-65, 92 to 94, Asp-114, Trp-161, and Ser-183; that span reads GAG.

It belongs to the class I-like SAM-binding methyltransferase superfamily. EFM7 family.

It localises to the cytoplasm. S-adenosyl-L-methionine-dependent protein methyltransferase that trimethylates the N-terminal glycine 'Gly-2' of elongation factor 1-alpha, before also catalyzing the mono- and dimethylation of 'Lys-3'. The sequence is that of Protein N-terminal and lysine N-methyltransferase EFM7 from Yarrowia lipolytica (strain CLIB 122 / E 150) (Yeast).